The chain runs to 298 residues: MVDEILKLKKEKGYIILAHNYQIPELQDIADFVGDSLQLARKAMELSEKKILFLGVDFMAELVKILNPDKKVIVPDKSATCPMANRLTPEIIREYREKFPGAPVVLYVNSTSECKTLADVICTSANAVEVVKRLDSSVVIFGPDRNLGEYVAEKTGKKVITIPENGHCPVHQFNAESIDAVRKKYPDAKVIVHPESPKPVRDKADYVGSTGQMEKIPEKDPSRIFVIGTEIGMIHKLKKKFPDREFVPLEMAVCVNMKKNTLENTLHALQTESFEVILPKEVIEKAKKPILRMFELMG.

Residues H19 and S36 each coordinate iminosuccinate. C81 contacts [4Fe-4S] cluster. Iminosuccinate contacts are provided by residues Y107–N109 and S124. C168 is a [4Fe-4S] cluster binding site. Iminosuccinate-binding positions include H193–E195 and T210. Residue C254 coordinates [4Fe-4S] cluster.

The protein belongs to the quinolinate synthase family. Type 2 subfamily. Requires [4Fe-4S] cluster as cofactor.

The protein localises to the cytoplasm. It carries out the reaction iminosuccinate + dihydroxyacetone phosphate = quinolinate + phosphate + 2 H2O + H(+). The protein operates within cofactor biosynthesis; NAD(+) biosynthesis; quinolinate from iminoaspartate: step 1/1. Catalyzes the condensation of iminoaspartate with dihydroxyacetone phosphate to form quinolinate. In Thermotoga petrophila (strain ATCC BAA-488 / DSM 13995 / JCM 10881 / RKU-1), this protein is Quinolinate synthase.